Reading from the N-terminus, the 264-residue chain is Acyl-[acyl-carrier-protein]--UDP-N-acetylglucosamine O-acyltransferase (264 aa).

The protein belongs to the transferase hexapeptide repeat family. LpxA subfamily. As to quaternary structure, homotrimer.

It is found in the cytoplasm. It carries out the reaction a (3R)-hydroxyacyl-[ACP] + UDP-N-acetyl-alpha-D-glucosamine = a UDP-3-O-[(3R)-3-hydroxyacyl]-N-acetyl-alpha-D-glucosamine + holo-[ACP]. It participates in glycolipid biosynthesis; lipid IV(A) biosynthesis; lipid IV(A) from (3R)-3-hydroxytetradecanoyl-[acyl-carrier-protein] and UDP-N-acetyl-alpha-D-glucosamine: step 1/6. Involved in the biosynthesis of lipid A, a phosphorylated glycolipid that anchors the lipopolysaccharide to the outer membrane of the cell. The protein is Acyl-[acyl-carrier-protein]--UDP-N-acetylglucosamine O-acyltransferase of Rickettsia peacockii (strain Rustic).